The sequence spans 364 residues: Cobalt-precorrin-5B C(1)-methyltransferase (364 aa).

The protein belongs to the CbiD family.

It catalyses the reaction Co-precorrin-5B + S-adenosyl-L-methionine = Co-precorrin-6A + S-adenosyl-L-homocysteine. Its pathway is cofactor biosynthesis; adenosylcobalamin biosynthesis; cob(II)yrinate a,c-diamide from sirohydrochlorin (anaerobic route): step 6/10. Functionally, catalyzes the methylation of C-1 in cobalt-precorrin-5B to form cobalt-precorrin-6A. In Thermoplasma acidophilum (strain ATCC 25905 / DSM 1728 / JCM 9062 / NBRC 15155 / AMRC-C165), this protein is Cobalt-precorrin-5B C(1)-methyltransferase.